The following is a 397-amino-acid chain: Argininosuccinate synthase (397 aa).

ATP is bound by residues 9-17 and Ala35; that span reads AFSGGLDTS. Tyr88 and Ser93 together coordinate L-citrulline. Residue Gly117 participates in ATP binding. 3 residues coordinate L-aspartate: Thr119, Asn123, and Asp124. Asn123 contributes to the L-citrulline binding site. Residue Arg127 coordinates L-citrulline.

This sequence belongs to the argininosuccinate synthase family. Type 1 subfamily. As to quaternary structure, homotetramer.

It localises to the cytoplasm. It catalyses the reaction L-citrulline + L-aspartate + ATP = 2-(N(omega)-L-arginino)succinate + AMP + diphosphate + H(+). Its pathway is amino-acid biosynthesis; L-arginine biosynthesis; L-arginine from L-ornithine and carbamoyl phosphate: step 2/3. This chain is Argininosuccinate synthase, found in Xanthomonas campestris pv. campestris (strain ATCC 33913 / DSM 3586 / NCPPB 528 / LMG 568 / P 25).